The following is a 104-amino-acid chain: 10 kDa heat shock protein, mitochondrial (104 aa).

Phosphoserine is present on serine 81.

Belongs to the GroES chaperonin family. Homohexamer.

It localises to the mitochondrion matrix. Functionally, eukaryotic CPN10 homolog which is essential for mitochondrial protein biogenesis, together with CPN60. Binds to CPN60 in the presence of Mg-ATP and suppresses the ATPase activity of the latter. In Schizosaccharomyces pombe (strain 972 / ATCC 24843) (Fission yeast), this protein is 10 kDa heat shock protein, mitochondrial (hsp10).